The chain runs to 144 residues: MISEWEKHTLLADTALQLDDPVRSILHYQQALSLSEDISECVEIEADERLLISVISCHNLAQFWRWAGDTEYELKYLQLASEKVLTLIPQCPNQNCASFIDSIGCCTKALIDFMKRHPNPAIAKQVEKIDTATNCEVIAKFRLN.

This is an uncharacterized protein from Vibrio parahaemolyticus serotype O3:K6 (strain RIMD 2210633).